Reading from the N-terminus, the 90-residue chain is Small ribosomal subunit protein uS17 (90 aa).

It belongs to the universal ribosomal protein uS17 family. In terms of assembly, part of the 30S ribosomal subunit.

Its function is as follows. One of the primary rRNA binding proteins, it binds specifically to the 5'-end of 16S ribosomal RNA. In Burkholderia multivorans (strain ATCC 17616 / 249), this protein is Small ribosomal subunit protein uS17.